Reading from the N-terminus, the 177-residue chain is Large ribosomal subunit protein uL6 (177 aa).

This sequence belongs to the universal ribosomal protein uL6 family. Part of the 50S ribosomal subunit.

Functionally, this protein binds to the 23S rRNA, and is important in its secondary structure. It is located near the subunit interface in the base of the L7/L12 stalk, and near the tRNA binding site of the peptidyltransferase center. This is Large ribosomal subunit protein uL6 from Laribacter hongkongensis (strain HLHK9).